The sequence spans 442 residues: Tryptophan synthase beta chain 2 (442 aa).

Lys110 carries the post-translational modification N6-(pyridoxal phosphate)lysine.

Belongs to the TrpB family. In terms of assembly, tetramer of two alpha and two beta chains. Pyridoxal 5'-phosphate serves as cofactor.

It catalyses the reaction (1S,2R)-1-C-(indol-3-yl)glycerol 3-phosphate + L-serine = D-glyceraldehyde 3-phosphate + L-tryptophan + H2O. It participates in amino-acid biosynthesis; L-tryptophan biosynthesis; L-tryptophan from chorismate: step 5/5. The beta subunit is responsible for the synthesis of L-tryptophan from indole and L-serine. The protein is Tryptophan synthase beta chain 2 of Thermococcus kodakarensis (strain ATCC BAA-918 / JCM 12380 / KOD1) (Pyrococcus kodakaraensis (strain KOD1)).